Consider the following 933-residue polypeptide: MASLPLCGSVRSPEGLPGDPSSQEDRQDYDPEDPVSGSGSYSPTSTDSNDLEPEWLDSVQKNGELFYLELSEDEEESLLPETPTVNHVRFSENEIIIEEDDYREGKKYEPKLKRFTKILKSKKLLPKRYNKKNSNASGPVSILKHQSNQKMGVIVQQRHKDVNIYVNPKKLTVTKAKEQLKLLEVLVGIIHQTKWSWRRTGKQGGGERLVVHGLLPGGSAMKSGQVLIGDVLVAVNDVEVTSENIERVLSCIPGPMQVKLTFENAYAMKKETTQPRQKKAQLNTSDLVKLLWGEEVEGIQQNILNTPHIVMYLTLQLDSETSKEEQEILYHYPVSEASQKLQSVRGIFLTLCDMLENVTGTQVTSSSLLLNRKQIHIAYWKETDKLLLIGLPAEEVPLPQLRNMIEDVAQTLKFMYGSLDSAFCQVENVPRLDHFFSLFFQRALQPTKLHSSASPSTQQYDASSAVLLDNLPGVRWLTLPQEIKLELDTALSDLEAADFAELSEDYYDMRRLYTILGSSLFYKGYLICSHLPKDDLIDIAVYCRHYCLLPLAAKQRIGQLVIWREVFPRHHLQPSADSNTEVFQEPEGRYFLLIVGLRHYMLCVLLEAGGCASRAIGNPGPDCIYVDQVKTTLHQLEGVDSRINERLASSPTPCLSCADWFLAGSHEKLDNLTTSPILSRLHGASRVATSPTCRRTLFSDYSLKTRKPSPSRSGGPDSGLEGEGVGLSPHTTESQGSHGSEETGALLKVTKKKSALPNPFHLGNLKKDLSEKELDIYNTVKLTSGPENTLFHYVALETVQGIFITPTHEEVAQLSGSIHPQLIKNFHQCCLSIRAVFQQTVAKEKKKALNGKDHSGSTNSVSSLNPVKEHGVLFECSPENWTDQRKAPPVMAYWVVGRLFLHPKLQELYVCFHDSVTEIAIEMAFKLFFGLTL.

A disordered region spans residues 1-54 (MASLPLCGSVRSPEGLPGDPSSQEDRQDYDPEDPVSGSGSYSPTSTDSNDLEPE). A compositionally biased stretch (polar residues) spans 37 to 48 (GSGSYSPTSTDS). In terms of domain architecture, PDZ spans 186–264 (LVGIIHQTKW…PMQVKLTFEN (79 aa)). A Phosphoserine modification is found at Ser-675. Residues 703-742 (LKTRKPSPSRSGGPDSGLEGEGVGLSPHTTESQGSHGSEE) are disordered. Over residues 710–719 (PSRSGGPDSG) the composition is skewed to low complexity. Positions 729 to 738 (PHTTESQGSH) are enriched in polar residues.

It belongs to the inturned family. Component of the CPLANE (ciliogenesis and planar polarity effectors) complex, composed of INTU, FUZ and WDPCP. Interacts with CPLANE1. Interacts with NPHP4 and DAAM1; INTU is mediating the interaction between NPHP4 and DAAM1.

The protein resides in the cytoplasm. Its subcellular location is the cell surface. It localises to the cytoskeleton. It is found in the cilium basal body. The protein localises to the microtubule organizing center. The protein resides in the centrosome. Its subcellular location is the centriole. Functionally, plays a key role in ciliogenesis and embryonic development. Regulator of cilia formation by controlling the organization of the apical actin cytoskeleton and the positioning of the basal bodies at the apical cell surface, which in turn is essential for the normal orientation of elongating ciliary microtubules. Plays a key role in definition of cell polarity via its role in ciliogenesis but not via conversion extension. Has an indirect effect on hedgehog signaling. Proposed to function as core component of the CPLANE (ciliogenesis and planar polarity effectors) complex involved in the recruitment of peripheral IFT-A proteins to basal bodies. Required for recruitment of CPLANE2 to the mother centriole. Binds phosphatidylinositol 3-phosphate with highest affinity, followed by phosphatidylinositol 4-phosphate and phosphatidylinositol 5-phosphate. This chain is Protein inturned (INTU), found in Bos taurus (Bovine).